Here is a 206-residue protein sequence, read N- to C-terminus: Probable GTP-binding protein EngB (206 aa).

In terms of domain architecture, EngB-type G spans histidine 23 to lysine 202. Residues glycine 31–serine 38, glycine 58–threonine 62, aspartate 83–glycine 86, threonine 150–aspartate 153, and phenylalanine 181–serine 183 each bind GTP. Residues serine 38 and threonine 60 each coordinate Mg(2+).

Belongs to the TRAFAC class TrmE-Era-EngA-EngB-Septin-like GTPase superfamily. EngB GTPase family. The cofactor is Mg(2+).

Necessary for normal cell division and for the maintenance of normal septation. In Myxococcus xanthus (strain DK1622), this protein is Probable GTP-binding protein EngB.